The following is a 734-amino-acid chain: Photosystem I P700 chlorophyll a apoprotein A2 (734 aa).

The next 8 helical transmembrane spans lie at 46 to 69 (IFASHFGQLTVIFLWTSGNLFHVA), 135 to 158 (LYTGAIFLLALSALFLIAGWLHLQ), 175 to 199 (LNHHLSGLFGVSSLAWAGHLVHVAI), 273 to 291 (IAHHHLAIAVVFIIAGHMY), 330 to 353 (LHFQLGLALAALGVITSLVAQHMY), 369 to 395 (AALYTHHQYIAGFLMTGAFAHGAIFFI), 417 to 439 (AIISHLSWASLFLGFHTLGLYVH), and 517 to 535 (FLVHHAIALGLHTTTLILV). The [4Fe-4S] cluster site is built by Cys559 and Cys568. The next 2 membrane-spanning stretches (helical) occupy residues 575 to 596 (AFYLAVFWMLNTIGWVTFYWHW) and 643 to 665 (LSVWAWMFLFGHLVWAIGFMFLI). His654, Met662, and Tyr670 together coordinate chlorophyll a. Position 671 (Trp671) interacts with phylloquinone. The chain crosses the membrane as a helical span at residues 707–727 (LVGLAHFSVGYIFTYAAFLIA).

Belongs to the PsaA/PsaB family. As to quaternary structure, the PsaA/B heterodimer binds the P700 chlorophyll special pair and subsequent electron acceptors. PSI consists of a core antenna complex that captures photons, and an electron transfer chain that converts photonic excitation into a charge separation. The eukaryotic PSI reaction center is composed of at least 11 subunits. P700 is a chlorophyll a/chlorophyll a' dimer, A0 is one or more chlorophyll a, A1 is one or both phylloquinones and FX is a shared 4Fe-4S iron-sulfur center. is required as a cofactor.

The protein resides in the plastid. It is found in the chloroplast thylakoid membrane. It catalyses the reaction reduced [plastocyanin] + hnu + oxidized [2Fe-2S]-[ferredoxin] = oxidized [plastocyanin] + reduced [2Fe-2S]-[ferredoxin]. Functionally, psaA and PsaB bind P700, the primary electron donor of photosystem I (PSI), as well as the electron acceptors A0, A1 and FX. PSI is a plastocyanin-ferredoxin oxidoreductase, converting photonic excitation into a charge separation, which transfers an electron from the donor P700 chlorophyll pair to the spectroscopically characterized acceptors A0, A1, FX, FA and FB in turn. Oxidized P700 is reduced on the lumenal side of the thylakoid membrane by plastocyanin. This is Photosystem I P700 chlorophyll a apoprotein A2 from Psilotum nudum (Whisk fern).